The chain runs to 337 residues: 1-aminocyclopropane-1-carboxylate deaminase (337 aa).

K50 is subject to N6-(pyridoxal phosphate)lysine.

The protein belongs to the ACC deaminase/D-cysteine desulfhydrase family. In terms of assembly, homotrimer. The cofactor is pyridoxal 5'-phosphate.

The catalysed reaction is 1-aminocyclopropane-1-carboxylate + H2O = 2-oxobutanoate + NH4(+). Functionally, catalyzes a cyclopropane ring-opening reaction, the irreversible conversion of 1-aminocyclopropane-1-carboxylate (ACC) to ammonia and alpha-ketobutyrate. Allows growth on ACC as a nitrogen source. In Mesorhizobium japonicum (strain LMG 29417 / CECT 9101 / MAFF 303099) (Mesorhizobium loti (strain MAFF 303099)), this protein is 1-aminocyclopropane-1-carboxylate deaminase.